A 262-amino-acid chain; its full sequence is Acyl-[acyl-carrier-protein]--UDP-N-acetylglucosamine O-acyltransferase (262 aa).

This sequence belongs to the transferase hexapeptide repeat family. LpxA subfamily. In terms of assembly, homotrimer.

Its subcellular location is the cytoplasm. The enzyme catalyses a (3R)-hydroxyacyl-[ACP] + UDP-N-acetyl-alpha-D-glucosamine = a UDP-3-O-[(3R)-3-hydroxyacyl]-N-acetyl-alpha-D-glucosamine + holo-[ACP]. The protein operates within glycolipid biosynthesis; lipid IV(A) biosynthesis; lipid IV(A) from (3R)-3-hydroxytetradecanoyl-[acyl-carrier-protein] and UDP-N-acetyl-alpha-D-glucosamine: step 1/6. Involved in the biosynthesis of lipid A, a phosphorylated glycolipid that anchors the lipopolysaccharide to the outer membrane of the cell. In Paracidovorax citrulli (strain AAC00-1) (Acidovorax citrulli), this protein is Acyl-[acyl-carrier-protein]--UDP-N-acetylglucosamine O-acyltransferase.